A 237-amino-acid polypeptide reads, in one-letter code: uncharacterized protein (237 aa).

Residues 1–28 form the signal peptide; that stretch reads MNRPLLSVAGSLFVAAWALYIFSCFQHG. Residues 52-96 form a disordered region; it reads NARDTAAHPSDTADNTSGSSTTTDPRSHGNAPPAPVGGAAQTHTQ. Over residues 63 to 75 the composition is skewed to polar residues; it reads TADNTSGSSTTTD.

This is an uncharacterized protein from Treponema pallidum (strain Nichols).